A 578-amino-acid polypeptide reads, in one-letter code: Proline--tRNA ligase (578 aa).

It belongs to the class-II aminoacyl-tRNA synthetase family. ProS type 1 subfamily. As to quaternary structure, homodimer.

The protein resides in the cytoplasm. It carries out the reaction tRNA(Pro) + L-proline + ATP = L-prolyl-tRNA(Pro) + AMP + diphosphate. In terms of biological role, catalyzes the attachment of proline to tRNA(Pro) in a two-step reaction: proline is first activated by ATP to form Pro-AMP and then transferred to the acceptor end of tRNA(Pro). As ProRS can inadvertently accommodate and process non-cognate amino acids such as alanine and cysteine, to avoid such errors it has two additional distinct editing activities against alanine. One activity is designated as 'pretransfer' editing and involves the tRNA(Pro)-independent hydrolysis of activated Ala-AMP. The other activity is designated 'posttransfer' editing and involves deacylation of mischarged Ala-tRNA(Pro). The misacylated Cys-tRNA(Pro) is not edited by ProRS. This Burkholderia vietnamiensis (strain G4 / LMG 22486) (Burkholderia cepacia (strain R1808)) protein is Proline--tRNA ligase.